Here is a 500-residue protein sequence, read N- to C-terminus: NAD(P)H-quinone oxidoreductase chain 4, chloroplastic (500 aa).

Helical transmembrane passes span 3-23, 37-57, 87-107, 113-130, 134-154, 167-187, 208-228, 242-262, 272-292, 305-325, 330-350, 386-406, 416-436, and 462-482; these read FFPW…LIFF, ICIC…HFQL, IGPI…AWPI, LFHF…GSFS, LLLF…LLSM, FILY…GMGL, ALEI…SPII, HYST…YGLV, AHSI…IYAA, IAYS…SITD, GAVL…FLAG, LALP…GIIT, ILIT…SLSM, and LFVS…PDFV.

Belongs to the complex I subunit 4 family.

It is found in the plastid. The protein localises to the chloroplast thylakoid membrane. The enzyme catalyses a plastoquinone + NADH + (n+1) H(+)(in) = a plastoquinol + NAD(+) + n H(+)(out). It carries out the reaction a plastoquinone + NADPH + (n+1) H(+)(in) = a plastoquinol + NADP(+) + n H(+)(out). In Platanus occidentalis (Sycamore), this protein is NAD(P)H-quinone oxidoreductase chain 4, chloroplastic.